Consider the following 385-residue polypeptide: Protein pelota homolog (385 aa).

Residue K162 forms a Glycyl lysine isopeptide (Lys-Gly) (interchain with G-Cter in SUMO2) linkage. S374, S380, S381, and S382 each carry phosphoserine.

It belongs to the eukaryotic release factor 1 family. Pelota subfamily. In terms of assembly, component of the Pelota-HBS1L complex, also named Dom34-Hbs1 complex, composed of PELO and HBS1L. Interacts with PINK1. Interacts with ABCE1. Interacts with CNOT4. The cofactor is a divalent metal cation.

The protein resides in the cytoplasm. Functionally, component of the Pelota-HBS1L complex, a complex that recognizes stalled ribosomes and triggers the No-Go Decay (NGD) pathway. In the Pelota-HBS1L complex, PELO recognizes ribosomes stalled at the 3' end of an mRNA and engages stalled ribosomes by destabilizing mRNA in the mRNA channel. Following mRNA extraction from stalled ribosomes by the SKI complex, the Pelota-HBS1L complex promotes recruitment of ABCE1, which drives the disassembly of stalled ribosomes, followed by degradation of damaged mRNAs as part of the NGD pathway. As part of the PINK1-regulated signaling, upon mitochondrial damage is recruited to the ribosome/mRNA-ribonucleoprotein complex associated to mitochondrial outer membrane thereby enabling the recruitment of autophagy receptors and induction of mitophagy. The sequence is that of Protein pelota homolog (Pelo) from Rattus norvegicus (Rat).